The primary structure comprises 166 residues: ATP synthase subunit b (166 aa).

Residues 8–28 form a helical membrane-spanning segment; it reads FSFGLFFWQALILVILILLLV.

This sequence belongs to the ATPase B chain family. F-type ATPases have 2 components, F(1) - the catalytic core - and F(0) - the membrane proton channel. F(1) has five subunits: alpha(3), beta(3), gamma(1), delta(1), epsilon(1). F(0) has three main subunits: a(1), b(2) and c(10-14). The alpha and beta chains form an alternating ring which encloses part of the gamma chain. F(1) is attached to F(0) by a central stalk formed by the gamma and epsilon chains, while a peripheral stalk is formed by the delta and b chains.

Its subcellular location is the cell inner membrane. F(1)F(0) ATP synthase produces ATP from ADP in the presence of a proton or sodium gradient. F-type ATPases consist of two structural domains, F(1) containing the extramembraneous catalytic core and F(0) containing the membrane proton channel, linked together by a central stalk and a peripheral stalk. During catalysis, ATP synthesis in the catalytic domain of F(1) is coupled via a rotary mechanism of the central stalk subunits to proton translocation. In terms of biological role, component of the F(0) channel, it forms part of the peripheral stalk, linking F(1) to F(0). The sequence is that of ATP synthase subunit b from Flavobacterium johnsoniae (strain ATCC 17061 / DSM 2064 / JCM 8514 / BCRC 14874 / CCUG 350202 / NBRC 14942 / NCIMB 11054 / UW101) (Cytophaga johnsonae).